Here is a 441-residue protein sequence, read N- to C-terminus: Methylenetetrahydrofolate--tRNA-(uracil-5-)-methyltransferase TrmFO (441 aa).

Position 10–15 (G10–G15) interacts with FAD.

This sequence belongs to the MnmG family. TrmFO subfamily. FAD serves as cofactor.

Its subcellular location is the cytoplasm. It carries out the reaction uridine(54) in tRNA + (6R)-5,10-methylene-5,6,7,8-tetrahydrofolate + NADH + H(+) = 5-methyluridine(54) in tRNA + (6S)-5,6,7,8-tetrahydrofolate + NAD(+). The catalysed reaction is uridine(54) in tRNA + (6R)-5,10-methylene-5,6,7,8-tetrahydrofolate + NADPH + H(+) = 5-methyluridine(54) in tRNA + (6S)-5,6,7,8-tetrahydrofolate + NADP(+). Catalyzes the folate-dependent formation of 5-methyl-uridine at position 54 (M-5-U54) in all tRNAs. This Desulforamulus reducens (strain ATCC BAA-1160 / DSM 100696 / MI-1) (Desulfotomaculum reducens) protein is Methylenetetrahydrofolate--tRNA-(uracil-5-)-methyltransferase TrmFO.